We begin with the raw amino-acid sequence, 246 residues long: E3 ubiquitin-protein ligase MARCHF2 (246 aa).

The segment at 56 to 116 (DSQSDCPFCR…ELCHTEFAVE (61 aa)) adopts an RING-CH-type zinc-finger fold. Residues cysteine 64, cysteine 67, cysteine 80, cysteine 82, histidine 90, cysteine 93, cysteine 106, and cysteine 109 each contribute to the Zn(2+) site. The interval 121–246 (PLTEWLKDPG…LKKVAEETPV (126 aa)) is required for interaction with IKBKG. Transmembrane regions (helical) follow at residues 138 to 158 (LCCD…SGWL) and 175 to 195 (AVGL…WTLV).

Interacts with STX6; the interaction promotes MARCHF2-mediated ubiquitination and degradation of CFTR. Interacts with MARCHF3. Interacts with GOPC/CAL; the interaction leads to CFTR ubiquitination and degradation. Interacts with CFTR; the interaction leads to CFTR ubiqtuitination and degradation. Interacts (via PDZ domain) with DLG1 (via PDZ domains); the interaction leads to DLG1 ubiqtuitination and degradation. Interacts with ERGIC3. Interacts with ADRB2. Interacts with IKBKG/NEMO; during the late stages of macrophage viral and bacterial infection; the interaction leads to ubiquitination and degradation of IKBKG/NEMO.

It is found in the endoplasmic reticulum membrane. The protein resides in the lysosome membrane. It localises to the endosome membrane. Its subcellular location is the golgi apparatus membrane. The protein localises to the cytoplasm. It is found in the cell membrane. It catalyses the reaction S-ubiquitinyl-[E2 ubiquitin-conjugating enzyme]-L-cysteine + [acceptor protein]-L-lysine = [E2 ubiquitin-conjugating enzyme]-L-cysteine + N(6)-ubiquitinyl-[acceptor protein]-L-lysine.. Its pathway is protein modification; protein ubiquitination. Its function is as follows. E3 ubiquitin-protein ligase that may mediate ubiquitination of TFRC and CD86, and promote their subsequent endocytosis and sorting to lysosomes via multivesicular bodies. E3 ubiquitin ligases accept ubiquitin from an E2 ubiquitin-conjugating enzyme in the form of a thioester and then directly transfer the ubiquitin to targeted substrates. Together with GOPC/CAL mediates the ubiquitination and lysosomal degradation of CFTR. Ubiquitinates and therefore mediates the degradation of DLG1. Regulates the intracellular trafficking and secretion of alpha1-antitrypsin/SERPINA1 and HP/haptoglobin via ubiquitination and degradation of the cargo receptor ERGIC3. Negatively regulates the antiviral and antibacterial immune response by repression of the NF-kB and type 1 IFN signaling pathways, via MARCHF2-mediated K48-linked polyubiquitination of IKBKG/NEMO, resulting in its proteasomal degradation. May be involved in endosomal trafficking through interaction with STX6. The sequence is that of E3 ubiquitin-protein ligase MARCHF2 (Marchf2) from Mus musculus (Mouse).